The primary structure comprises 423 residues: T-box transcription factor T-A (423 aa).

The segment at residues 44-212 (LWTKFKELTN…HNPFAKAFLD (169 aa)) is a DNA-binding region (T-box). Basic and acidic residues predominate over residues 215–227 (ERSDHKEVPDHST). 2 disordered regions span residues 215–234 (ERSD…QSGY) and 280–304 (AAPY…SSGS). The segment covering 290 to 304 (RSTTTNNYMDNSSGS) has biased composition (polar residues).

Monomer. Binds DNA as a monomer. As to expression, first expressed at the dorsal side of the blastula embryo. Expressed in the germ ring, shield and chordamesoderm during gastrulation and is restricted to the notochord and tailbud during somitogenesis (at protein level).

It is found in the nucleus. Involved in the transcriptional regulation of genes required for mesoderm differentiation, including itself. Indispensable for the formation of the notochord and the tail structure. Functions together with tbx16/spadetail in development of trunk and tail mesoderm. Functions by itself early in development to repress medial floor plate and promote notochord fate but at later times, functions together with tbx16/spadetail to promote medial floor plate formation. Acts in a parallel pathway to, but cooperates with, non-canonical wnt-signaling during tail formation. Required for the morphogenesis of Kupffer's vesicle and regulates left-right asymmetry. This is T-box transcription factor T-A (tbxta) from Danio rerio (Zebrafish).